The primary structure comprises 85 residues: Small ribosomal subunit protein uS17 (85 aa).

This sequence belongs to the universal ribosomal protein uS17 family. In terms of assembly, part of the 30S ribosomal subunit.

In terms of biological role, one of the primary rRNA binding proteins, it binds specifically to the 5'-end of 16S ribosomal RNA. The chain is Small ribosomal subunit protein uS17 from Natranaerobius thermophilus (strain ATCC BAA-1301 / DSM 18059 / JW/NM-WN-LF).